The chain runs to 473 residues: Proline transporter 1 (473 aa).

Over residues Met1–Gln11 the composition is skewed to basic and acidic residues. Residues Met1 to Glu31 are disordered. 11 helical membrane passes run Pro65 to Tyr85, Ser88 to Ile108, Leu145 to Ala165, Ile188 to Leu208, Ile210 to Ser230, Ile252 to Pro272, Leu290 to Trp310, Val333 to Met353, Val378 to Leu398, Phe401 to Met421, and Trp437 to Val457.

This sequence belongs to the amino acid/polyamine transporter 2 family. Amino acid/auxin permease (AAAP) (TC 2.A.18.3) subfamily. In terms of tissue distribution, expressed in roots, leaf blades and sheaths, stems and young panicle.

The protein localises to the cell membrane. In terms of biological role, proline transporter that mediates proline transport across the plasma membrane when expressed in a heterologous system (Xenopus oocytes). The sequence is that of Proline transporter 1 (PROT1) from Oryza sativa subsp. japonica (Rice).